The chain runs to 45 residues: Large ribosomal subunit protein bL34 (45 aa).

The segment at 1-45 is disordered; sequence MTKRTLGGTVRKQKRTSGFRARMRSHTGQNVIRARRKKGRHRLTV. Composition is skewed to basic residues over residues 11-25 and 33-45; these read RKQK…RMRS and RARR…RLTV.

Belongs to the bacterial ribosomal protein bL34 family.

This is Large ribosomal subunit protein bL34 from Picosynechococcus sp. (strain ATCC 27264 / PCC 7002 / PR-6) (Agmenellum quadruplicatum).